Consider the following 118-residue polypeptide: Hydrogenase maturation factor HypA (118 aa).

Histidine 2 contacts Ni(2+). Zn(2+)-binding residues include cysteine 73, cysteine 76, cysteine 89, and cysteine 92.

The protein belongs to the HypA/HybF family.

Involved in the maturation of [NiFe] hydrogenases. Required for nickel insertion into the metal center of the hydrogenase. This chain is Hydrogenase maturation factor HypA, found in Shewanella sp. (strain MR-7).